The chain runs to 43 residues: Disintegrin CV (43 aa).

4 cysteine pairs are disulfide-bonded: Cys1–Cys10, Cys6–Cys29, Cys7–Cys34, and Cys19–Cys36. A Disintegrin domain is found at 1 to 43 (CTTGPCCRQCKLKPAGTTCWRTSVSSHYCTGRSCECPSYPGNG). The Cell attachment site; atypical (RTS) signature appears at 21 to 23 (RTS).

The protein belongs to the disintegrin family. Short disintegrin subfamily. As to quaternary structure, monomer. In terms of tissue distribution, expressed by the venom gland.

Its subcellular location is the secreted. Functionally, specifically interacts with the alpha-1/beta-1 integrin (ITGA1/ITGB1). Exhibits highly inhibitory effects on cell adhesion and cell migration to collagens I and IV. Also shows in vivo anti-angiogenic activity. This chain is Disintegrin CV, found in Cerastes vipera (Sahara sand viper).